The sequence spans 226 residues: uncharacterized protein (226 aa).

The N-terminal stretch at 1 to 18 (MRRIGLCISLLVTVLVMS) is a signal peptide.

This is an uncharacterized protein from Bacillus subtilis (strain 168).